The following is a 220-amino-acid chain: PKHD-type hydroxylase PCC7424_1929 (220 aa).

The Fe2OG dioxygenase domain maps to K77 to S173. H95, D97, and H154 together coordinate Fe cation. R164 contributes to the 2-oxoglutarate binding site.

The cofactor is Fe(2+). Requires L-ascorbate as cofactor.

This Gloeothece citriformis (strain PCC 7424) (Cyanothece sp. (strain PCC 7424)) protein is PKHD-type hydroxylase PCC7424_1929.